A 261-amino-acid chain; its full sequence is Probable enoyl-CoA hydratase EchA17 (261 aa).

Belongs to the enoyl-CoA hydratase/isomerase family.

It catalyses the reaction a (3S)-3-hydroxyacyl-CoA = a (2E)-enoyl-CoA + H2O. It carries out the reaction a 4-saturated-(3S)-3-hydroxyacyl-CoA = a (3E)-enoyl-CoA + H2O. Its function is as follows. Could possibly oxidize fatty acids using specific components. In Mycobacterium bovis (strain BCG / Pasteur 1173P2), this protein is Probable enoyl-CoA hydratase EchA17 (echA17).